The following is a 393-amino-acid chain: Phosphoglycerate kinase (393 aa).

Substrate is bound by residues 21–23 (DFN), arginine 36, 59–62 (HLGR), arginine 118, and arginine 151. ATP contacts are provided by residues lysine 201, glutamate 323, and 349–352 (GGDS).

The protein belongs to the phosphoglycerate kinase family. In terms of assembly, monomer.

It localises to the cytoplasm. The enzyme catalyses (2R)-3-phosphoglycerate + ATP = (2R)-3-phospho-glyceroyl phosphate + ADP. The protein operates within carbohydrate degradation; glycolysis; pyruvate from D-glyceraldehyde 3-phosphate: step 2/5. This is Phosphoglycerate kinase from Moorella thermoacetica (strain ATCC 39073 / JCM 9320).